A 350-amino-acid chain; its full sequence is Protein RecA (350 aa).

66 to 73 (GPESSGKT) is a binding site for ATP.

The protein belongs to the RecA family.

The protein resides in the cytoplasm. In terms of biological role, can catalyze the hydrolysis of ATP in the presence of single-stranded DNA, the ATP-dependent uptake of single-stranded DNA by duplex DNA, and the ATP-dependent hybridization of homologous single-stranded DNAs. It interacts with LexA causing its activation and leading to its autocatalytic cleavage. This is Protein RecA from Dichelobacter nodosus (strain VCS1703A).